Consider the following 220-residue polypeptide: Ribosomal RNA large subunit methyltransferase E (220 aa).

S-adenosyl-L-methionine-binding residues include Gly64, Trp66, Asp92, Asp108, and Asp133. Lys173 acts as the Proton acceptor in catalysis.

Belongs to the class I-like SAM-binding methyltransferase superfamily. RNA methyltransferase RlmE family.

Its subcellular location is the cytoplasm. The catalysed reaction is uridine(2552) in 23S rRNA + S-adenosyl-L-methionine = 2'-O-methyluridine(2552) in 23S rRNA + S-adenosyl-L-homocysteine + H(+). Specifically methylates the uridine in position 2552 of 23S rRNA at the 2'-O position of the ribose in the fully assembled 50S ribosomal subunit. In Acidovorax sp. (strain JS42), this protein is Ribosomal RNA large subunit methyltransferase E.